We begin with the raw amino-acid sequence, 167 residues long: GTP-dependent dephospho-CoA kinase (167 aa).

Residues Asp39, Val41, Asp58, Lys60, and Glu117 each contribute to the GTP site.

Belongs to the GTP-dependent DPCK family.

It catalyses the reaction 3'-dephospho-CoA + GTP = GDP + CoA + H(+). Its pathway is cofactor biosynthesis; coenzyme A biosynthesis. Catalyzes the GTP-dependent phosphorylation of the 3'-hydroxyl group of dephosphocoenzyme A to form coenzyme A (CoA). The protein is GTP-dependent dephospho-CoA kinase of Korarchaeum cryptofilum (strain OPF8).